A 199-amino-acid polypeptide reads, in one-letter code: Protein-methionine-sulfoxide reductase heme-binding subunit MsrQ (199 aa).

4 helical membrane passes run 10-30 (WLKV…FWAI), 82-102 (LWCF…ELGI), 116-136 (PYLT…LTST), and 153-173 (VVYL…KILS).

The protein belongs to the MsrQ family. As to quaternary structure, heterodimer of a catalytic subunit (MsrP) and a heme-binding subunit (MsrQ). FMN serves as cofactor. Heme b is required as a cofactor.

The protein resides in the cell inner membrane. Part of the MsrPQ system that repairs oxidized periplasmic proteins containing methionine sulfoxide residues (Met-O), using respiratory chain electrons. Thus protects these proteins from oxidative-stress damage caused by reactive species of oxygen and chlorine generated by the host defense mechanisms. MsrPQ is essential for the maintenance of envelope integrity under bleach stress, rescuing a wide series of structurally unrelated periplasmic proteins from methionine oxidation, including the primary periplasmic chaperone SurA and the lipoprotein Pal. MsrQ provides electrons for reduction to the reductase catalytic subunit MsrP, using the quinone pool of the respiratory chain. The polypeptide is Protein-methionine-sulfoxide reductase heme-binding subunit MsrQ (Salmonella agona (strain SL483)).